Here is a 233-residue protein sequence, read N- to C-terminus: MTEADSPARIGIVTFPGSLDDQDTALAVRAAGAEPVSLWHGDSDLAGVDAVILPGGFSYGDYLRAGAIARFSPMVAALVPAARAGLPILGICNGFQVLCEAGLLPGALTRNVGLHFVCRDQRLRVEAPGTAWTRGYQDGEEIVIPVKHGDGRYVAAPDVLAELEAAGRVVVRYVGGNPNGSAADIAGICNESRTIVGLMPHPEHAVDDLTGPGVDGLRMFTSVLSGFLSAFSS.

A Glutamine amidotransferase type-1 domain is found at 9 to 233 (RIGIVTFPGS…LSGFLSAFSS (225 aa)). The active-site Nucleophile is Cys92. Active-site residues include His201 and Glu203.

As to quaternary structure, part of the FGAM synthase complex composed of 1 PurL, 1 PurQ and 2 PurS subunits.

The protein resides in the cytoplasm. It carries out the reaction N(2)-formyl-N(1)-(5-phospho-beta-D-ribosyl)glycinamide + L-glutamine + ATP + H2O = 2-formamido-N(1)-(5-O-phospho-beta-D-ribosyl)acetamidine + L-glutamate + ADP + phosphate + H(+). The enzyme catalyses L-glutamine + H2O = L-glutamate + NH4(+). It participates in purine metabolism; IMP biosynthesis via de novo pathway; 5-amino-1-(5-phospho-D-ribosyl)imidazole from N(2)-formyl-N(1)-(5-phospho-D-ribosyl)glycinamide: step 1/2. In terms of biological role, part of the phosphoribosylformylglycinamidine synthase complex involved in the purines biosynthetic pathway. Catalyzes the ATP-dependent conversion of formylglycinamide ribonucleotide (FGAR) and glutamine to yield formylglycinamidine ribonucleotide (FGAM) and glutamate. The FGAM synthase complex is composed of three subunits. PurQ produces an ammonia molecule by converting glutamine to glutamate. PurL transfers the ammonia molecule to FGAR to form FGAM in an ATP-dependent manner. PurS interacts with PurQ and PurL and is thought to assist in the transfer of the ammonia molecule from PurQ to PurL. The sequence is that of Phosphoribosylformylglycinamidine synthase subunit PurQ from Frankia casuarinae (strain DSM 45818 / CECT 9043 / HFP020203 / CcI3).